A 265-amino-acid chain; its full sequence is Phosphatidylglycerol--prolipoprotein diacylglyceryl transferase (265 aa).

The next 7 helical transmembrane spans lie at Val17 to Gly37, Leu57 to Tyr77, Ile89 to Ala109, Phe127 to Gly147, Gln176 to Ala196, Leu201 to Val218, and Leu233 to Ala253. Arg140 contacts a 1,2-diacyl-sn-glycero-3-phospho-(1'-sn-glycerol).

This sequence belongs to the Lgt family.

The protein resides in the cell inner membrane. The catalysed reaction is L-cysteinyl-[prolipoprotein] + a 1,2-diacyl-sn-glycero-3-phospho-(1'-sn-glycerol) = an S-1,2-diacyl-sn-glyceryl-L-cysteinyl-[prolipoprotein] + sn-glycerol 1-phosphate + H(+). Its pathway is protein modification; lipoprotein biosynthesis (diacylglyceryl transfer). Its function is as follows. Catalyzes the transfer of the diacylglyceryl group from phosphatidylglycerol to the sulfhydryl group of the N-terminal cysteine of a prolipoprotein, the first step in the formation of mature lipoproteins. The chain is Phosphatidylglycerol--prolipoprotein diacylglyceryl transferase from Azoarcus sp. (strain BH72).